Here is a 245-residue protein sequence, read N- to C-terminus: 3-deoxy-manno-octulosonate cytidylyltransferase (245 aa).

This sequence belongs to the KdsB family.

It is found in the cytoplasm. The catalysed reaction is 3-deoxy-alpha-D-manno-oct-2-ulosonate + CTP = CMP-3-deoxy-beta-D-manno-octulosonate + diphosphate. Its pathway is nucleotide-sugar biosynthesis; CMP-3-deoxy-D-manno-octulosonate biosynthesis; CMP-3-deoxy-D-manno-octulosonate from 3-deoxy-D-manno-octulosonate and CTP: step 1/1. The protein operates within bacterial outer membrane biogenesis; lipopolysaccharide biosynthesis. Functionally, activates KDO (a required 8-carbon sugar) for incorporation into bacterial lipopolysaccharide in Gram-negative bacteria. The sequence is that of 3-deoxy-manno-octulosonate cytidylyltransferase from Desulfatibacillum aliphaticivorans.